The following is a 186-amino-acid chain: MSDKFDVNELKRRMQGAAQSLKHELGGLRTGRASASMLEPVQVDAYGSHMPLNQVATVSVPEPRLISVQVWDKSMVKAVEKGIVDSNLGLSPATEGQVIRLRIPELNEERRKELVKVAHKYAEAARVAVRHVRRDGLDTIKKLEKAHEISEDDQKRLDQEVQKATDAAIAEIDQLLANKEKEILTV.

This sequence belongs to the RRF family.

It localises to the cytoplasm. Functionally, responsible for the release of ribosomes from messenger RNA at the termination of protein biosynthesis. May increase the efficiency of translation by recycling ribosomes from one round of translation to another. The protein is Ribosome-recycling factor of Rhodopseudomonas palustris (strain ATCC BAA-98 / CGA009).